The following is an 88-amino-acid chain: UPF0367 protein Tery_1229 (88 aa).

This sequence belongs to the UPF0367 family.

This chain is UPF0367 protein Tery_1229, found in Trichodesmium erythraeum (strain IMS101).